An 802-amino-acid polypeptide reads, in one-letter code: ATP-dependent zinc metalloprotease FTSH 3, mitochondrial (802 aa).

The N-terminal 21 residues, 1–21 (MSLSSLSRALARSARSSRQRQ), are a transit peptide targeting the mitochondrion. A compositionally biased stretch (low complexity) spans 1–23 (MSLSSLSRALARSARSSRQRQGS). 2 disordered regions span residues 1-33 (MSLS…GLRA) and 85-120 (DKSK…SGDQ). The span at 85 to 113 (DKSKKNHGKHSEEENKGKGDESDKSDSKK) shows a compositional bias: basic and acidic residues. Residues 133–153 (MIAPLFLFGLLLLSASASSSE) traverse the membrane as a helical segment. An ATP-binding site is contributed by 360–367 (GPPGTGKT). His585 contacts Zn(2+). Residue Glu586 is part of the active site. 2 residues coordinate Zn(2+): His589 and Asp661. The disordered stretch occupies residues 773 to 802 (KQGFQDEDSNRNAELSNADGASSLGEAVAS).

This sequence in the N-terminal section; belongs to the AAA ATPase family. The protein in the C-terminal section; belongs to the peptidase M41 family. It depends on Zn(2+) as a cofactor.

It is found in the mitochondrion inner membrane. Probable ATP-dependent zinc metallopeptidase. The protein is ATP-dependent zinc metalloprotease FTSH 3, mitochondrial (FTSH3) of Oryza sativa subsp. japonica (Rice).